The following is a 147-amino-acid chain: SsrA-binding protein (147 aa).

Residues 119–147 (AKGKKQHDKRESEKQKEWERDKQRLMRPK) form a disordered region. Positions 126–147 (DKRESEKQKEWERDKQRLMRPK) are enriched in basic and acidic residues.

Belongs to the SmpB family.

The protein localises to the cytoplasm. Its function is as follows. Required for rescue of stalled ribosomes mediated by trans-translation. Binds to transfer-messenger RNA (tmRNA), required for stable association of tmRNA with ribosomes. tmRNA and SmpB together mimic tRNA shape, replacing the anticodon stem-loop with SmpB. tmRNA is encoded by the ssrA gene; the 2 termini fold to resemble tRNA(Ala) and it encodes a 'tag peptide', a short internal open reading frame. During trans-translation Ala-aminoacylated tmRNA acts like a tRNA, entering the A-site of stalled ribosomes, displacing the stalled mRNA. The ribosome then switches to translate the ORF on the tmRNA; the nascent peptide is terminated with the 'tag peptide' encoded by the tmRNA and targeted for degradation. The ribosome is freed to recommence translation, which seems to be the essential function of trans-translation. The sequence is that of SsrA-binding protein from Nitrosospira multiformis (strain ATCC 25196 / NCIMB 11849 / C 71).